Reading from the N-terminus, the 417-residue chain is Serine hydroxymethyltransferase (417 aa).

Residues L121 and G125 to L127 contribute to the (6S)-5,6,7,8-tetrahydrofolate site. Residue K229 is modified to N6-(pyridoxal phosphate)lysine. (6S)-5,6,7,8-tetrahydrofolate is bound at residue S355–F357.

The protein belongs to the SHMT family. In terms of assembly, homodimer. Pyridoxal 5'-phosphate is required as a cofactor.

It is found in the cytoplasm. It catalyses the reaction (6R)-5,10-methylene-5,6,7,8-tetrahydrofolate + glycine + H2O = (6S)-5,6,7,8-tetrahydrofolate + L-serine. It participates in one-carbon metabolism; tetrahydrofolate interconversion. It functions in the pathway amino-acid biosynthesis; glycine biosynthesis; glycine from L-serine: step 1/1. Functionally, catalyzes the reversible interconversion of serine and glycine with tetrahydrofolate (THF) serving as the one-carbon carrier. This reaction serves as the major source of one-carbon groups required for the biosynthesis of purines, thymidylate, methionine, and other important biomolecules. Also exhibits THF-independent aldolase activity toward beta-hydroxyamino acids, producing glycine and aldehydes, via a retro-aldol mechanism. In Buchnera aphidicola subsp. Schizaphis graminum (strain Sg), this protein is Serine hydroxymethyltransferase.